A 711-amino-acid chain; its full sequence is L-type lectin-domain containing receptor kinase VIII.2 (711 aa).

The signal sequence occupies residues 1–30; that stretch reads MLKLPPRFFSVYSTLIHILASFLCSSDVRG. Residues 31–315 lie on the Extracellular side of the membrane; sequence DFPATRFDLG…NKLCKKSPAA (285 aa). Residues 35–260 form a legume-lectin like region; sequence TRFDLGTLTL…IHSVDWWSFS (226 aa). N-linked (GlcNAc...) asparagine glycosylation occurs at Asn57. The segment at 265-306 is disordered; that stretch reads ESSESPPPMPNSPPPSSPSSSITPSLSTVRRKTADPSSSCRN. The segment covering 269–281 has biased composition (pro residues); that stretch reads SPPPMPNSPPPSS. A compositionally biased stretch (low complexity) spans 282-291; it reads PSSSITPSLS. A helical transmembrane segment spans residues 316-336; sequence VAGVVTAGAFFLALFAGVIIW. Over 337-711 the chain is Cytoplasmic; it reads VYSKKIKYTR…IFIVGKDRSV (375 aa). A Protein kinase domain is found at 374–656; sequence FSSSRVIGNG…LVGEADVPEV (283 aa). Residues 380 to 388 and Lys403 each bind ATP; that span reads IGNGAFGTV. Asp497 serves as the catalytic Proton acceptor.

In the C-terminal section; belongs to the protein kinase superfamily. Ser/Thr protein kinase family. It in the N-terminal section; belongs to the leguminous lectin family.

The protein localises to the cell membrane. It carries out the reaction L-seryl-[protein] + ATP = O-phospho-L-seryl-[protein] + ADP + H(+). The enzyme catalyses L-threonyl-[protein] + ATP = O-phospho-L-threonyl-[protein] + ADP + H(+). Functionally, involved in resistance response to the pathogenic oomycetes Phytophthora infestans and Phytophthora capsici. The protein is L-type lectin-domain containing receptor kinase VIII.2 of Arabidopsis thaliana (Mouse-ear cress).